The sequence spans 68 residues: Large ribosomal subunit protein uL30 (68 aa).

Belongs to the universal ribosomal protein uL30 family. In terms of assembly, part of the 50S ribosomal subunit.

This chain is Large ribosomal subunit protein uL30, found in Bartonella quintana (strain Toulouse) (Rochalimaea quintana).